The following is a 207-amino-acid chain: Cytochrome c biogenesis ATP-binding export protein CcmA (207 aa).

The ABC transporter domain occupies 3-206; sequence LMAEGLSARR…AKSLEMTGFV (204 aa). 35–42 provides a ligand contact to ATP; it reads GPNGAGKS.

This sequence belongs to the ABC transporter superfamily. CcmA exporter (TC 3.A.1.107) family. The complex is composed of two ATP-binding proteins (CcmA) and two transmembrane proteins (CcmB).

The protein resides in the cell inner membrane. It carries out the reaction heme b(in) + ATP + H2O = heme b(out) + ADP + phosphate + H(+). In terms of biological role, part of the ABC transporter complex CcmAB involved in the biogenesis of c-type cytochromes; once thought to export heme, this seems not to be the case, but its exact role is uncertain. Responsible for energy coupling to the transport system. This chain is Cytochrome c biogenesis ATP-binding export protein CcmA, found in Rhizobium meliloti (strain 1021) (Ensifer meliloti).